Consider the following 232-residue polypeptide: Small ribosomal subunit protein uS3 (232 aa).

In terms of domain architecture, KH type-2 spans 39-107 (VRQYLTKELK…PAQINIAEVR (69 aa)).

The protein belongs to the universal ribosomal protein uS3 family. In terms of assembly, part of the 30S ribosomal subunit. Forms a tight complex with proteins S10 and S14.

Its function is as follows. Binds the lower part of the 30S subunit head. Binds mRNA in the 70S ribosome, positioning it for translation. This chain is Small ribosomal subunit protein uS3, found in Aliivibrio salmonicida (strain LFI1238) (Vibrio salmonicida (strain LFI1238)).